Here is a 228-residue protein sequence, read N- to C-terminus: DNA repair and recombination protein RadB (228 aa).

Belongs to the eukaryotic RecA-like protein family. RadB subfamily.

Functionally, involved in DNA repair and in homologous recombination. May regulate the cleavage reactions of the branch-structured DNA. Has a very weak ATPase activity that is not stimulated by DNA. Binds DNA but does not promote DNA strands exchange. The protein is DNA repair and recombination protein RadB of Thermococcus sibiricus (strain DSM 12597 / MM 739).